The chain runs to 149 residues: 1,4-dihydroxy-2-naphthoyl-CoA hydrolase (149 aa).

Aspartate 19 is an active-site residue.

Belongs to the 4-hydroxybenzoyl-CoA thioesterase family. DHNA-CoA hydrolase subfamily.

It catalyses the reaction 1,4-dihydroxy-2-naphthoyl-CoA + H2O = 1,4-dihydroxy-2-naphthoate + CoA + H(+). It participates in cofactor biosynthesis; phylloquinone biosynthesis. It functions in the pathway quinol/quinone metabolism; 1,4-dihydroxy-2-naphthoate biosynthesis; 1,4-dihydroxy-2-naphthoate from chorismate: step 7/7. Its function is as follows. Catalyzes the hydrolysis of 1,4-dihydroxy-2-naphthoyl-CoA (DHNA-CoA) to 1,4-dihydroxy-2-naphthoate (DHNA), a reaction involved in phylloquinone (vitamin K1) biosynthesis. The chain is 1,4-dihydroxy-2-naphthoyl-CoA hydrolase from Synechococcus sp. (strain CC9902).